The primary structure comprises 60 residues: Potassium channel toxin-like Tx677 (60 aa).

The N-terminal stretch at 1-22 (MKISALVMITLLICSMMILCQG) is a signal peptide. 3 disulfides stabilise this stretch: cysteine 30/cysteine 51, cysteine 36/cysteine 56, and cysteine 40/cysteine 58.

Belongs to the short scorpion toxin superfamily. Potassium channel inhibitor family. As to expression, expressed by the venom gland.

It localises to the secreted. In terms of biological role, weakly inhibits Kv11.1/KCNH2/ERG1, Kv1.2/KCNA2 and Kv1.3/KCNA3 voltage-gated potassium channels. This chain is Potassium channel toxin-like Tx677, found in Buthus israelis (Israeli scorpion).